A 101-amino-acid chain; its full sequence is Integration host factor subunit beta (101 aa).

This sequence belongs to the bacterial histone-like protein family. As to quaternary structure, heterodimer of an alpha and a beta chain.

Functionally, this protein is one of the two subunits of integration host factor, a specific DNA-binding protein that functions in genetic recombination as well as in transcriptional and translational control. The polypeptide is Integration host factor subunit beta (Nitrobacter hamburgensis (strain DSM 10229 / NCIMB 13809 / X14)).